A 110-amino-acid polypeptide reads, in one-letter code: Ribonuclease P protein component 1 (110 aa).

It belongs to the eukaryotic/archaeal RNase P protein component 1 family. As to quaternary structure, consists of a catalytic RNA component and at least 4-5 protein subunits.

The protein localises to the cytoplasm. The enzyme catalyses Endonucleolytic cleavage of RNA, removing 5'-extranucleotides from tRNA precursor.. Its function is as follows. Part of ribonuclease P, a protein complex that generates mature tRNA molecules by cleaving their 5'-ends. This Methanosarcina mazei (strain ATCC BAA-159 / DSM 3647 / Goe1 / Go1 / JCM 11833 / OCM 88) (Methanosarcina frisia) protein is Ribonuclease P protein component 1.